The chain runs to 244 residues: Orotidine 5'-phosphate decarboxylase (244 aa).

Substrate is bound by residues Asp-14, Lys-36, 63–72 (DLKFHDIPNT), Thr-127, Arg-188, Gln-197, Gly-217, and Arg-218. Residue Lys-65 is the Proton donor of the active site.

Belongs to the OMP decarboxylase family. Type 1 subfamily. In terms of assembly, homodimer.

It catalyses the reaction orotidine 5'-phosphate + H(+) = UMP + CO2. It functions in the pathway pyrimidine metabolism; UMP biosynthesis via de novo pathway; UMP from orotate: step 2/2. Functionally, catalyzes the decarboxylation of orotidine 5'-monophosphate (OMP) to uridine 5'-monophosphate (UMP). In Syntrophotalea carbinolica (strain DSM 2380 / NBRC 103641 / GraBd1) (Pelobacter carbinolicus), this protein is Orotidine 5'-phosphate decarboxylase.